Reading from the N-terminus, the 731-residue chain is Actin filament-associated protein 1 (731 aa).

Met-1 is subject to N-acetylmethionine. The tract at residues 46 to 90 (VKDHAQKAETNNLPAPPQMPLPEIPQPWLPPDSGPPPLPTSSLPE) is disordered. Pro residues predominate over residues 59 to 84 (PAPPQMPLPEIPQPWLPPDSGPPPLP). The SH3-binding motif lies at 70 to 73 (PQPW). The SH2-binding 1 motif lies at 93–96 (YEEA). A disordered region spans residues 118-138 (GSSYESYDEEEEDGKGKKTQH). A PH 1 domain is found at 152–248 (DAKICAFLLR…WLKVIKEAYS (97 aa)). Positions 252–318 (GPVDPECSPP…SKSEAKGTVS (67 aa)) are disordered. Residues 271–284 (AELEKKLSSERPSS) show a composition bias toward basic and acidic residues. A phosphoserine mark is found at Ser-283 and Ser-284. Positions 348 to 442 (DVPTCGYLNV…WIGILLAETG (95 aa)) constitute a PH 2 domain. The SH2-binding 2 signature appears at 452 to 457 (YDYIDV). The disordered stretch occupies residues 511 to 550 (SLKNKKPPASSNGLPVKGRAPSSQQKKVESAGGVKRTASN). Ser-549 is subject to Phosphoserine. Positions 558 to 649 (KNRVEADAKR…VKESLKKALA (92 aa)) form a coiled coil. The interaction with F-actin stretch occupies residues 595–638 (DLRAAIEVNAGRKTQVALEDKLKRLEEECKQREAERVSLELELT). The tract at residues 657 to 731 (AIEPKSGTSS…AREWELKNGT (75 aa)) is disordered. Ser-665, Ser-666, and Ser-669 each carry phosphoserine. Phosphothreonine is present on Thr-676. A compositionally biased stretch (polar residues) spans 678–687 (ENSPISSCDT). A phosphoserine mark is found at Ser-680 and Ser-688. The span at 721-731 (KAREWELKNGT) shows a compositional bias: basic and acidic residues.

Monomer and homomultimer. Interacts via its C-terminus with F-actin; probably involving AFAP1 multimers. Interacts with activated SRC SH3-SH2 domains. Interacts via its PH 1 domain with PRKCA, PRKCB and PRKCI. In terms of processing, phosphorylated on tyrosine residues. In terms of tissue distribution, widely expressed with highest levels in brain.

Its subcellular location is the cytoplasm. The protein resides in the cytoskeleton. The protein localises to the stress fiber. Its function is as follows. Can cross-link actin filaments into both network and bundle structures. May modulate changes in actin filament integrity and induce lamellipodia formation. May function as an adapter molecule that links other proteins, such as SRC and PKC to the actin cytoskeleton. This chain is Actin filament-associated protein 1 (Afap1), found in Rattus norvegicus (Rat).